Here is a 147-residue protein sequence, read N- to C-terminus: Peptide deformylase 1 (147 aa).

Cys-90 and His-132 together coordinate Fe cation. Residue Glu-133 is part of the active site. Residue His-136 coordinates Fe cation.

The protein belongs to the polypeptide deformylase family. The cofactor is Fe(2+).

The enzyme catalyses N-terminal N-formyl-L-methionyl-[peptide] + H2O = N-terminal L-methionyl-[peptide] + formate. Removes the formyl group from the N-terminal Met of newly synthesized proteins. Requires at least a dipeptide for an efficient rate of reaction. N-terminal L-methionine is a prerequisite for activity but the enzyme has broad specificity at other positions. The protein is Peptide deformylase 1 of Clostridium perfringens (strain 13 / Type A).